Here is a 266-residue protein sequence, read N- to C-terminus: Putative carbamate hydrolase RutD (266 aa).

This sequence belongs to the AB hydrolase superfamily. Hydrolase RutD family.

The catalysed reaction is carbamate + 2 H(+) = NH4(+) + CO2. In terms of biological role, involved in pyrimidine catabolism. May facilitate the hydrolysis of carbamate, a reaction that can also occur spontaneously. This Escherichia coli O7:K1 (strain IAI39 / ExPEC) protein is Putative carbamate hydrolase RutD.